The chain runs to 268 residues: Energy-coupling factor transporter transmembrane protein EcfT (268 aa).

5 helical membrane-spanning segments follow: residues 26–46, 72–92, 106–126, 149–169, and 247–267; these read IVTF…TYAW, IFWL…GTPI, ILNA…STIL, IGVP…FVPL, and VAFA…TWLH.

It belongs to the energy-coupling factor EcfT family. Forms a stable energy-coupling factor (ECF) transporter complex composed of 2 membrane-embedded substrate-binding proteins (S component), 2 ATP-binding proteins (A component) and 2 transmembrane proteins (T component). May be able to interact with more than 1 S component at a time.

The protein resides in the cell membrane. In terms of biological role, transmembrane (T) component of an energy-coupling factor (ECF) ABC-transporter complex. Unlike classic ABC transporters this ECF transporter provides the energy necessary to transport a number of different substrates. This Leuconostoc gelidum subsp. gasicomitatum (strain DSM 15947 / CCUG 46042 / CECT 5767 / JCM 12535 / LMG 18811 / NBRC 113245 / TB1-10) (Leuconostoc gasicomitatum) protein is Energy-coupling factor transporter transmembrane protein EcfT.